The following is a 347-amino-acid chain: Phosphoribosylformylglycinamidine cyclo-ligase (347 aa).

This sequence belongs to the AIR synthase family.

It is found in the cytoplasm. It carries out the reaction 2-formamido-N(1)-(5-O-phospho-beta-D-ribosyl)acetamidine + ATP = 5-amino-1-(5-phospho-beta-D-ribosyl)imidazole + ADP + phosphate + H(+). It participates in purine metabolism; IMP biosynthesis via de novo pathway; 5-amino-1-(5-phospho-D-ribosyl)imidazole from N(2)-formyl-N(1)-(5-phospho-D-ribosyl)glycinamide: step 2/2. This is Phosphoribosylformylglycinamidine cyclo-ligase from Prochlorococcus marinus (strain AS9601).